Here is a 139-residue protein sequence, read N- to C-terminus: Ribulose bisphosphate carboxylase small subunit, plasmid (139 aa).

It belongs to the RuBisCO small chain family. As to quaternary structure, heterohexadecamer of 8 large and 8 small subunits.

In terms of biological role, ruBisCO catalyzes two reactions: the carboxylation of D-ribulose 1,5-bisphosphate, the primary event in carbon dioxide fixation, as well as the oxidative fragmentation of the pentose substrate. Both reactions occur simultaneously and in competition at the same active site. Although the small subunit is not catalytic it is essential for maximal activity. The chain is Ribulose bisphosphate carboxylase small subunit, plasmid from Cupriavidus necator (strain ATCC 17699 / DSM 428 / KCTC 22496 / NCIMB 10442 / H16 / Stanier 337) (Ralstonia eutropha).